A 131-amino-acid chain; its full sequence is Small ribosomal subunit protein bS6 (131 aa).

A disordered region spans residues 96–131 (VTEASPMAKAKDERDSRRGPAGDRSYDEANAEEIAE). A compositionally biased stretch (basic and acidic residues) spans 104–122 (KAKDERDSRRGPAGDRSYD).

Belongs to the bacterial ribosomal protein bS6 family.

Functionally, binds together with bS18 to 16S ribosomal RNA. The protein is Small ribosomal subunit protein bS6 of Shewanella sp. (strain MR-4).